The chain runs to 246 residues: 1-(5-phosphoribosyl)-5-[(5-phosphoribosylamino)methylideneamino] imidazole-4-carboxamide isomerase (246 aa).

Asp-10 functions as the Proton acceptor in the catalytic mechanism. The active-site Proton donor is the Asp-135.

This sequence belongs to the HisA/HisF family.

The protein localises to the cytoplasm. The catalysed reaction is 1-(5-phospho-beta-D-ribosyl)-5-[(5-phospho-beta-D-ribosylamino)methylideneamino]imidazole-4-carboxamide = 5-[(5-phospho-1-deoxy-D-ribulos-1-ylimino)methylamino]-1-(5-phospho-beta-D-ribosyl)imidazole-4-carboxamide. It participates in amino-acid biosynthesis; L-histidine biosynthesis; L-histidine from 5-phospho-alpha-D-ribose 1-diphosphate: step 4/9. This is 1-(5-phosphoribosyl)-5-[(5-phosphoribosylamino)methylideneamino] imidazole-4-carboxamide isomerase from Methanococcoides burtonii (strain DSM 6242 / NBRC 107633 / OCM 468 / ACE-M).